The sequence spans 313 residues: Ribosomal RNA small subunit methyltransferase H (313 aa).

Residues 35–37 (GGH), aspartate 55, phenylalanine 81, aspartate 103, and glutamine 110 contribute to the S-adenosyl-L-methionine site.

It belongs to the methyltransferase superfamily. RsmH family.

Its subcellular location is the cytoplasm. It catalyses the reaction cytidine(1402) in 16S rRNA + S-adenosyl-L-methionine = N(4)-methylcytidine(1402) in 16S rRNA + S-adenosyl-L-homocysteine + H(+). Its function is as follows. Specifically methylates the N4 position of cytidine in position 1402 (C1402) of 16S rRNA. This chain is Ribosomal RNA small subunit methyltransferase H, found in Azotobacter vinelandii (strain DJ / ATCC BAA-1303).